The primary structure comprises 231 residues: NADH-quinone oxidoreductase subunit C (231 aa).

The protein belongs to the complex I 30 kDa subunit family. In terms of assembly, NDH-1 is composed of 14 different subunits. Subunits NuoB, C, D, E, F, and G constitute the peripheral sector of the complex.

The protein localises to the cell membrane. The catalysed reaction is a quinone + NADH + 5 H(+)(in) = a quinol + NAD(+) + 4 H(+)(out). Functionally, NDH-1 shuttles electrons from NADH, via FMN and iron-sulfur (Fe-S) centers, to quinones in the respiratory chain. The immediate electron acceptor for the enzyme in this species is believed to be a menaquinone. Couples the redox reaction to proton translocation (for every two electrons transferred, four hydrogen ions are translocated across the cytoplasmic membrane), and thus conserves the redox energy in a proton gradient. The protein is NADH-quinone oxidoreductase subunit C of Mycobacterium sp. (strain JLS).